The chain runs to 160 residues: Ribosomal RNA large subunit methyltransferase H (160 aa).

S-adenosyl-L-methionine is bound by residues leucine 76, glycine 108, and 127–132; that span reads LGKMTW.

Belongs to the RNA methyltransferase RlmH family. In terms of assembly, homodimer.

It is found in the cytoplasm. It carries out the reaction pseudouridine(1915) in 23S rRNA + S-adenosyl-L-methionine = N(3)-methylpseudouridine(1915) in 23S rRNA + S-adenosyl-L-homocysteine + H(+). In terms of biological role, specifically methylates the pseudouridine at position 1915 (m3Psi1915) in 23S rRNA. The protein is Ribosomal RNA large subunit methyltransferase H of Rhizobium leguminosarum bv. trifolii (strain WSM2304).